The following is a 391-amino-acid chain: Elongation factor Tu (391 aa).

Residues 10–201 (KPHVNIGTIG…AVDEFIPTPE (192 aa)) enclose the tr-type G domain. Residues 19-26 (GHVDHGKT) form a G1 region. 19 to 26 (GHVDHGKT) contributes to the GTP binding site. Thr-26 is a Mg(2+) binding site. Residues 55–59 (GITIS) form a G2 region. Positions 76–79 (DCPG) are G3. Residues 76 to 80 (DCPGH) and 131 to 134 (NKVD) contribute to the GTP site. A G4 region spans residues 131–134 (NKVD). The G5 stretch occupies residues 169–171 (SAL).

It belongs to the TRAFAC class translation factor GTPase superfamily. Classic translation factor GTPase family. EF-Tu/EF-1A subfamily. As to quaternary structure, monomer.

The protein localises to the cytoplasm. The catalysed reaction is GTP + H2O = GDP + phosphate + H(+). Functionally, GTP hydrolase that promotes the GTP-dependent binding of aminoacyl-tRNA to the A-site of ribosomes during protein biosynthesis. This chain is Elongation factor Tu, found in Roseobacter denitrificans (strain ATCC 33942 / OCh 114) (Erythrobacter sp. (strain OCh 114)).